The sequence spans 70 residues: DNA gyrase inhibitor YacG (70 aa).

The Zn(2+) site is built by C9, C12, C28, and C32. Residues 44–70 (SRKIPGSSIDPESIVTTNNKQDNVDEQ) are disordered.

It belongs to the DNA gyrase inhibitor YacG family. As to quaternary structure, interacts with GyrB. Zn(2+) serves as cofactor.

Inhibits all the catalytic activities of DNA gyrase by preventing its interaction with DNA. Acts by binding directly to the C-terminal domain of GyrB, which probably disrupts DNA binding by the gyrase. The sequence is that of DNA gyrase inhibitor YacG from Legionella pneumophila subsp. pneumophila (strain Philadelphia 1 / ATCC 33152 / DSM 7513).